The chain runs to 147 residues: Large ribosomal subunit protein uL22c (147 aa).

This sequence belongs to the universal ribosomal protein uL22 family. As to quaternary structure, part of the 50S ribosomal subunit.

It localises to the plastid. Its subcellular location is the chloroplast. Its function is as follows. This protein binds specifically to 23S rRNA. Functionally, the globular domain of the protein is located near the polypeptide exit tunnel on the outside of the subunit, while an extended beta-hairpin is found that lines the wall of the exit tunnel in the center of the 70S ribosome. The sequence is that of Large ribosomal subunit protein uL22c (rpl22) from Lolium perenne (Perennial ryegrass).